The primary structure comprises 755 residues: Ribosome biogenesis protein BOP1 (755 aa).

2 stretches are compositionally biased toward polar residues: residues 1 to 10 and 43 to 61; these read MSQEPSSSFS and ELSSSSDNGDQGQPLTEPN. Positions 1 to 65 are disordered; that stretch reads MSQEPSSSFS…PLTEPNNIPI (65 aa). Positions 309–754 are interaction with EB1; it reads MDSMLPTLPN…SGTDGVLRLF (446 aa). Residues 335-374 form a WD 1 repeat; that stretch reads TGTRRINGLTFSPKGMFFAVGGRDCILRVFETYSGRQVRA. Positions 482 to 505 are disordered; that stretch reads YNEGSEDDDAAESARFNEERHQRG. Basic and acidic residues predominate over residues 496–505; sequence RFNEERHQRG. WD repeat units lie at residues 617-655, 659-698, and 725-755; these read PGVKQVTASGMGYGDNFITGSADSQCALFANAAGPEPTA, YHTSTIRNIDVHPCGGLVATCSDDGIVQISRIVDASLVKM, and DGSVGISRVTWHPRQPWLLCSGTDGVLRLFK.

This sequence belongs to the WD repeat BOP1/ERB1 family. In terms of assembly, interacts (via C-terminal WD repeats) with giardin subunit beta. Interacts (via C-terminal WD repeats) with EB1.

The protein resides in the nucleus. Its subcellular location is the nucleolus. The protein localises to the nucleus membrane. Its function is as follows. Required for maturation of ribosomal RNAs and formation of the large ribosomal subunit. This chain is Ribosome biogenesis protein BOP1, found in Giardia intestinalis (Giardia lamblia).